A 337-amino-acid chain; its full sequence is Primase homolog protein (337 aa).

The region spanning 205-304 (SEIIIVEGEP…WLVKWPKKSE (100 aa)) is the Toprim domain. The Mg(2+) site is built by E211, D273, and D275.

Mg(2+) serves as cofactor.

May act as a DNA primase. The polypeptide is Primase homolog protein (Arabidopsis thaliana (Mouse-ear cress)).